Consider the following 196-residue polypeptide: Carnitine operon protein CaiE (196 aa).

Positions 173–196 (TQPLRQMEENRPRLQGTTDVTPKR) are disordered. The segment covering 187 to 196 (QGTTDVTPKR) has biased composition (polar residues).

It belongs to the transferase hexapeptide repeat family.

The protein operates within amine and polyamine metabolism; carnitine metabolism. Overproduction of CaiE stimulates the activity of CaiB and CaiD. This Escherichia coli O6:K15:H31 (strain 536 / UPEC) protein is Carnitine operon protein CaiE.